The following is a 138-amino-acid chain: Cysteine desulfuration protein SufE (138 aa).

Cysteine 51 (cysteine persulfide intermediate) is an active-site residue.

It belongs to the SufE family. As to quaternary structure, homodimer. Interacts with SufS.

Its subcellular location is the cytoplasm. It functions in the pathway cofactor biosynthesis; iron-sulfur cluster biosynthesis. Functionally, participates in cysteine desulfuration mediated by SufS. Cysteine desulfuration mobilizes sulfur from L-cysteine to yield L-alanine and constitutes an essential step in sulfur metabolism for biosynthesis of a variety of sulfur-containing biomolecules. Functions as a sulfur acceptor for SufS, by mediating the direct transfer of the sulfur atom from the S-sulfanylcysteine of SufS, an intermediate product of cysteine desulfuration process. The protein is Cysteine desulfuration protein SufE of Salmonella choleraesuis (strain SC-B67).